The primary structure comprises 690 residues: MIYNESLPDNLPSLCSKALLADVPCDRLVRDLRPDFFYRPASLERMCTSGCAAALSSWTSSVRSACGKNVSVPTDFDLLASPVVIPATLEHTFEFTCLRENNKFCGPVAALAAVFTDPGVSPFNYLSEAPEGTTDPGRCDSCIAARLRMRAGSPYFDGPIVASESLYQRLTSSCGITGKPVTTTTIDYSISEPEPTEDSCDGTQYTIQNTDDCYSISKAQGVATAWLLADNGLAAYCADFPTSGSLCIANKCDTVTVGVNQTCIAIANSAGITVTQLKAWNQVINPVCSNIGMMNGTTLCISPPGPRLPLPGTTDIPPLVPTTAAPVPTDAAAGSNKPCSRWYNVEAGDYCNLVILKFAISLDDFLFLNPGINANCTNLYAKESYCVHPVGDINTYAGRPGHVSITIDPNATFTGIPFTMLPNATVKGYSRPYTPAPLAKGVREDCVHYFKGDDYQFPPDQLGYWKSNCELAARNYGADNDNFVAWNALGTNVTDPSCSFVPGGRYCGSWNSQVVRTITETEPATATTGDGGPTPPAPTHSGQPQDCDTWHVVSSGDSCQSVADDAGISRDQFHDWNPAVGRDCSTNFWLGQAYCVGVSEDMGDMSTVASSTTSSVTPGPSKPEPPGPTHTGQPSDCDEWDVVETGDTCGSLAESNDISLSQFFDWNPAVSRDCVANFWIGQAYCIGVSS.

N-linked (GlcNAc...) asparagine glycosylation is found at N4 and N69. 3 consecutive LysM domains span residues 203-248, 253-301, and 341-387; these read TQYT…SLCI, DTVT…TLCI, and RWYN…SYCV. Residues N260, N295, N375, N410, N423, and N492 are each glycosylated (N-linked (GlcNAc...) asparagine). The disordered stretch occupies residues 523-546; it reads PATATTGDGGPTPPAPTHSGQPQD. Positions 549-596 constitute a LysM 4 domain; it reads TWHVVSSGDSCQSVADDAGISRDQFHDWNPAVGRDCSTNFWLGQAYCV. The span at 606–619 shows a compositional bias: low complexity; the sequence is STVASSTTSSVTPG. The disordered stretch occupies residues 606–636; the sequence is STVASSTTSSVTPGPSKPEPPGPTHTGQPSD. One can recognise a LysM 5 domain in the interval 639–686; the sequence is EWDVVETGDTCGSLAESNDISLSQFFDWNPAVSRDCVANFWIGQAYCI.

This sequence belongs to the secreted LysM effector family.

In terms of biological role, might have a role in sequestration of chitin oligosaccharides (breakdown products of fungal cell walls that are released during invasion and act as triggers of host immunity) to dampen host defense. Does not play an important role during host colonization. The protein is Secreted LysM effector Vd5LysM of Verticillium dahliae (strain VdLs.17 / ATCC MYA-4575 / FGSC 10137) (Verticillium wilt).